Reading from the N-terminus, the 37-residue chain is L-amino-acid oxidase (37 aa).

The protein belongs to the flavin monoamine oxidase family. FIG1 subfamily. As to quaternary structure, homodimer; non-covalently linked. FAD is required as a cofactor. In terms of processing, N-Glycosylated. Expressed by the venom gland.

The protein resides in the secreted. The catalysed reaction is an L-alpha-amino acid + O2 + H2O = a 2-oxocarboxylate + H2O2 + NH4(+). It catalyses the reaction L-leucine + O2 + H2O = 4-methyl-2-oxopentanoate + H2O2 + NH4(+). It carries out the reaction L-phenylalanine + O2 + H2O = 3-phenylpyruvate + H2O2 + NH4(+). The enzyme catalyses L-tryptophan + O2 + H2O = indole-3-pyruvate + H2O2 + NH4(+). The catalysed reaction is L-methionine + O2 + H2O = 4-methylsulfanyl-2-oxobutanoate + H2O2 + NH4(+). It catalyses the reaction L-isoleucine + O2 + H2O = (S)-3-methyl-2-oxopentanoate + H2O2 + NH4(+). It carries out the reaction L-arginine + O2 + H2O = 5-guanidino-2-oxopentanoate + H2O2 + NH4(+). The enzyme catalyses L-histidine + O2 + H2O = 3-(imidazol-5-yl)pyruvate + H2O2 + NH4(+). The catalysed reaction is L-valine + O2 + H2O = 3-methyl-2-oxobutanoate + H2O2 + NH4(+). Its function is as follows. Catalyzes an oxidative deamination of predominantly hydrophobic and aromatic L-amino acids, thus producing hydrogen peroxide that may contribute to the diverse toxic effects of this enzyme. Is highly active on L-Leu, L-Met, moderately active on L-Arg, L-Trp, L-Phe, L-Val, L-His, and L-Ile, and is weakly or not active on L-Cys, L-Lys, L-Ala, L-Thr, L-Asp, L-Ser, and L-Pro. Exhibits diverse biological activities, such as hemorrhage, edema, apoptosis of vascular endothelial cells or tumor cell lines, as well as regulation of platelet aggregation. Effects of snake L-amino oxidases on platelets are controversial, since they either induce aggregation or inhibit agonist-induced aggregation. These different effects are probably due to different experimental conditions. This protein induce hemolysis and has antibacterial and antiparasitic activities (against the Gram-positive S.aureus). Tested in vivo, this protein significantly inhibits Ehrlich ascite tumors growth and induces an influx of polymorphonuclear cells, as well as spontaneous liberation of hydrogen peroxide from peritoneal macrophages. In Bothrops jararaca (Jararaca), this protein is L-amino-acid oxidase.